The sequence spans 131 residues: RutC family protein YjgH (131 aa).

This sequence belongs to the RutC family.

The sequence is that of RutC family protein YjgH (yjgH) from Escherichia coli (strain K12).